Consider the following 300-residue polypeptide: Putative S-adenosyl-L-methionine-dependent methyltransferase MUL_0817 (300 aa).

Residues Asp-127 and 156 to 157 (DL) each bind S-adenosyl-L-methionine.

Belongs to the UPF0677 family.

In terms of biological role, exhibits S-adenosyl-L-methionine-dependent methyltransferase activity. The protein is Putative S-adenosyl-L-methionine-dependent methyltransferase MUL_0817 of Mycobacterium ulcerans (strain Agy99).